The following is a 402-amino-acid chain: S-adenosylmethionine synthase (402 aa).

H15 contributes to the ATP binding site. D17 contributes to the Mg(2+) binding site. Residue E43 participates in K(+) binding. L-methionine is bound by residues E56 and Q99. Residues Q99 to T109 form a flexible loop region. ATP is bound by residues D174–K176, R247–F248, D256, R262–K263, A279, and K283. Residue D256 coordinates L-methionine. K287 serves as a coordination point for L-methionine.

It belongs to the AdoMet synthase family. In terms of assembly, homotetramer; dimer of dimers. It depends on Mg(2+) as a cofactor. K(+) is required as a cofactor.

The protein resides in the cytoplasm. The catalysed reaction is L-methionine + ATP + H2O = S-adenosyl-L-methionine + phosphate + diphosphate. The protein operates within amino-acid biosynthesis; S-adenosyl-L-methionine biosynthesis; S-adenosyl-L-methionine from L-methionine: step 1/1. Its function is as follows. Catalyzes the formation of S-adenosylmethionine (AdoMet) from methionine and ATP. The overall synthetic reaction is composed of two sequential steps, AdoMet formation and the subsequent tripolyphosphate hydrolysis which occurs prior to release of AdoMet from the enzyme. This Streptomyces avermitilis (strain ATCC 31267 / DSM 46492 / JCM 5070 / NBRC 14893 / NCIMB 12804 / NRRL 8165 / MA-4680) protein is S-adenosylmethionine synthase.